Consider the following 357-residue polypeptide: Protein pelota homolog (357 aa).

Belongs to the eukaryotic release factor 1 family. Pelota subfamily. In terms of assembly, monomer. The cofactor is a divalent metal cation.

It is found in the cytoplasm. In terms of biological role, may function in recognizing stalled ribosomes, interact with stem-loop structures in stalled mRNA molecules, and effect endonucleolytic cleavage of the mRNA. May play a role in the release non-functional ribosomes and degradation of damaged mRNAs. Has endoribonuclease activity. In Thermococcus kodakarensis (strain ATCC BAA-918 / JCM 12380 / KOD1) (Pyrococcus kodakaraensis (strain KOD1)), this protein is Protein pelota homolog.